The primary structure comprises 1099 residues: Glutamine--fructose-6-phosphate aminotransferase [isomerizing] (1099 aa).

The active-site Nucleophile; for GATase activity is the C2. The region spanning 2-71 (CGIIGYIGND…DIDGNIGIGH (70 aa)) is the Glutamine amidotransferase type-2; first part domain. One can recognise an HTH cro/C1-type domain in the interval 198–253 (LRKVREKLGLTRKDVEKLCGVKEIYIVKIETGKLESIEEERLKKLCSLYGINFEEI). Positions 278–413 (IIGYIIGDGH…IQFLLLRFGI (136 aa)) constitute a DOD-type homing endonuclease domain. Residues 571–723 (SRWATHGNVC…DGDVVVIKKK (153 aa)) enclose the Glutamine amidotransferase type-2; second part domain. SIS domains are found at residues 786-923 (LAKC…LLGR) and 948-1089 (TIKE…VDKP). K1094 functions as the For Fru-6P isomerization activity in the catalytic mechanism.

It in the C-terminal section; belongs to the SIS family. GFAT subfamily. In terms of assembly, homodimer. This protein undergoes a protein self splicing that involves a post-translational excision of the intervening region (intein) followed by peptide ligation.

The protein resides in the cytoplasm. The enzyme catalyses D-fructose 6-phosphate + L-glutamine = D-glucosamine 6-phosphate + L-glutamate. Catalyzes the first step in hexosamine metabolism, converting fructose-6P into glucosamine-6P using glutamine as a nitrogen source. In Methanocaldococcus jannaschii (strain ATCC 43067 / DSM 2661 / JAL-1 / JCM 10045 / NBRC 100440) (Methanococcus jannaschii), this protein is Glutamine--fructose-6-phosphate aminotransferase [isomerizing] (glmS).